The following is a 318-amino-acid chain: Coproporphyrin III ferrochelatase (318 aa).

Residues His186 and Glu268 each coordinate Fe(2+).

The protein belongs to the ferrochelatase family.

It localises to the cytoplasm. The catalysed reaction is Fe-coproporphyrin III + 2 H(+) = coproporphyrin III + Fe(2+). The protein operates within porphyrin-containing compound metabolism; protoheme biosynthesis. In terms of biological role, involved in coproporphyrin-dependent heme b biosynthesis. Catalyzes the insertion of ferrous iron into coproporphyrin III to form Fe-coproporphyrin III. The polypeptide is Coproporphyrin III ferrochelatase (Lactococcus lactis subsp. cremoris (strain SK11)).